Consider the following 317-residue polypeptide: Protoheme IX farnesyltransferase (317 aa).

9 helical membrane passes run 28–48 (IIPL…HGHI), 53–73 (LLIT…LNCI), 101–121 (LIFA…FVNL), 122–142 (LSAC…THWL), 150–170 (IVIG…AVTG), 178–198 (ILFA…ALMI), 223–243 (IWIY…PFQA), 246–266 (LFYA…AWEL), and 282–302 (YSIL…LPAV).

This sequence belongs to the UbiA prenyltransferase family. Protoheme IX farnesyltransferase subfamily.

It is found in the cell inner membrane. The catalysed reaction is heme b + (2E,6E)-farnesyl diphosphate + H2O = Fe(II)-heme o + diphosphate. The protein operates within porphyrin-containing compound metabolism; heme O biosynthesis; heme O from protoheme: step 1/1. Functionally, converts heme B (protoheme IX) to heme O by substitution of the vinyl group on carbon 2 of heme B porphyrin ring with a hydroxyethyl farnesyl side group. This Picosynechococcus sp. (strain ATCC 27264 / PCC 7002 / PR-6) (Agmenellum quadruplicatum) protein is Protoheme IX farnesyltransferase.